A 1673-amino-acid chain; its full sequence is Protein-methionine sulfoxide oxidase mical3b (1673 aa).

Positions 2–492 (WDGQSEMCQA…RHLIDTGEGP (491 aa)) are monooxygenase domain. FAD is bound by residues C96, 96-124 (CGLRTAIELGFLGARVVLVEKRDAFSRNN), E115, R117, R122, N124, and D396. In terms of domain architecture, Calponin-homology (CH) spans 512 to 618 (MARYSKLLSW…YLSQLHELLK (107 aa)). The disordered stretch occupies residues 647–714 (SKLGQSLSRK…PKASEGHSKV (68 aa)). Residues 661–671 (DKKEKEADSVG) are compositionally biased toward basic and acidic residues. Residues 791 to 853 (DVCYFCGRRV…KHHFSFRLAS (63 aa)) form the LIM zinc-binding domain. The span at 882–892 (LSSLGSVGTAT) shows a compositional bias: low complexity. 5 disordered regions span residues 882–901 (LSSLGSVGTATPDSWSSSTH), 918–938 (RIELENYKPSPQKQDSPLQEV), 951–1100 (SLQE…KRSE), 1159–1188 (QSARICDSSTQTHSVTDLQETSPLGPTDGD), and 1357–1393 (GPDADGDVKEKKRSSLFSPRKSRKNGNAAAESGRETG). Over residues 973 to 992 (LVWKKGEELHARTNGERKLD) the composition is skewed to basic and acidic residues. Composition is skewed to acidic residues over residues 993–1002 (LEEELKEEEG) and 1010–1041 (EGEEEGEVSEEEQDEGDSSDESYEGCSDDPDI). The segment covering 1081–1094 (SDLTPDPSTTPESS) has biased composition (low complexity). Polar residues predominate over residues 1159-1182 (QSARICDSSTQTHSVTDLQETSPL). Coiled coils occupy residues 1475-1531 (EEEL…AVEK) and 1573-1638 (QEKN…VEQR). Residues 1495–1661 (KQEELRRLHR…EKEEDSDLEA (167 aa)) enclose the bMERB domain.

This sequence belongs to the Mical family. FAD is required as a cofactor.

It localises to the cytoplasm. It is found in the cytoskeleton. The protein localises to the nucleus. The enzyme catalyses L-methionyl-[F-actin] + NADPH + O2 + H(+) = L-methionyl-(R)-S-oxide-[F-actin] + NADP(+) + H2O. Monooxygenase that promotes depolymerization of F-actin by mediating oxidation of specific methionine residues on actin. Acts by modifying actin subunits through the addition of oxygen to form methionine-sulfoxide, leading to promote actin filament severing and prevent repolymerization. Involved in exocytic vesicles tethering and fusion: the monooxygenase activity is required for this process. In Danio rerio (Zebrafish), this protein is Protein-methionine sulfoxide oxidase mical3b (mical3b).